A 208-amino-acid chain; its full sequence is Putative thymidylate kinase (208 aa).

The tract at residues 8–15 (GIDGSGVS) is defective ATP-binding.

The protein belongs to the thymidylate kinase family.

It carries out the reaction dTMP + ATP = dTDP + ADP. This chain is Putative thymidylate kinase (tmk), found in Aeropyrum pernix (strain ATCC 700893 / DSM 11879 / JCM 9820 / NBRC 100138 / K1).